A 189-amino-acid chain; its full sequence is HGPRTase-like protein 2 (189 aa).

This sequence belongs to the purine/pyrimidine phosphoribosyltransferase family. Archaeal HPRT subfamily.

In terms of biological role, may catalyze a purine salvage reaction, the substrate is unknown. The protein is HGPRTase-like protein 2 of Haloarcula marismortui (strain ATCC 43049 / DSM 3752 / JCM 8966 / VKM B-1809) (Halobacterium marismortui).